A 342-amino-acid chain; its full sequence is Phosphoribosylformylglycinamidine cyclo-ligase (342 aa).

This sequence belongs to the AIR synthase family.

The protein resides in the cytoplasm. It carries out the reaction 2-formamido-N(1)-(5-O-phospho-beta-D-ribosyl)acetamidine + ATP = 5-amino-1-(5-phospho-beta-D-ribosyl)imidazole + ADP + phosphate + H(+). The protein operates within purine metabolism; IMP biosynthesis via de novo pathway; 5-amino-1-(5-phospho-D-ribosyl)imidazole from N(2)-formyl-N(1)-(5-phospho-D-ribosyl)glycinamide: step 2/2. In Gloeothece citriformis (strain PCC 7424) (Cyanothece sp. (strain PCC 7424)), this protein is Phosphoribosylformylglycinamidine cyclo-ligase.